The chain runs to 202 residues: Small ribosomal subunit protein uS4c (202 aa).

The S4 RNA-binding domain occupies 90–153 (MRLDNVIFRL…KSEAIISKNI (64 aa)).

Belongs to the universal ribosomal protein uS4 family. In terms of assembly, part of the 30S ribosomal subunit. Contacts protein S5. The interaction surface between S4 and S5 is involved in control of translational fidelity.

It localises to the plastid. Its subcellular location is the chloroplast. Functionally, one of the primary rRNA binding proteins, it binds directly to 16S rRNA where it nucleates assembly of the body of the 30S subunit. With S5 and S12 plays an important role in translational accuracy. This is Small ribosomal subunit protein uS4c (rps4) from Cyathophorum bulbosum (Moss).